The chain runs to 647 residues: Threonine--tRNA ligase (647 aa).

One can recognise a TGS domain in the interval 1 to 61 (MINITFPDGA…TEDGSIEIVT (61 aa)). A catalytic region spans residues 242 to 540 (DHRKLGKELD…LIENYKGAFP (299 aa)). Zn(2+) contacts are provided by C336, H387, and H517.

Belongs to the class-II aminoacyl-tRNA synthetase family. In terms of assembly, homodimer. Zn(2+) serves as cofactor.

It is found in the cytoplasm. It catalyses the reaction tRNA(Thr) + L-threonine + ATP = L-threonyl-tRNA(Thr) + AMP + diphosphate + H(+). Catalyzes the attachment of threonine to tRNA(Thr) in a two-step reaction: L-threonine is first activated by ATP to form Thr-AMP and then transferred to the acceptor end of tRNA(Thr). Also edits incorrectly charged L-seryl-tRNA(Thr). This is Threonine--tRNA ligase from Streptococcus pneumoniae serotype 2 (strain D39 / NCTC 7466).